Here is a 379-residue protein sequence, read N- to C-terminus: NAD-dependent protein deacetylase sirtuin-2 (379 aa).

The span at 1-10 (MSEEVSKRVE) shows a compositional bias: basic and acidic residues. The tract at residues 1–32 (MSEEVSKRVEEEADTPGLEGQSDDSSDEGDAS) is disordered. Residues 21-32 (QSDDSSDEGDAS) show a composition bias toward acidic residues. One can recognise a Deacetylase sirtuin-type domain in the interval 55–335 (KVLDELTLDS…MTLAELLGWK (281 aa)). NAD(+)-binding positions include 83–87 (AGIST), 93–95 (DFR), and 165–168 (QNID). H185 acts as the Proton acceptor in catalysis. The Zn(2+) site is built by C193, C198, C219, and C222. Residues 260–261 (TS), 284–286 (NME), and C321 each bind NAD(+). Residues 349 to 361 (IDSKDAKKTDKEA) are compositionally biased toward basic and acidic residues. The segment at 349 to 379 (IDSKDAKKTDKEASQSSKSAVAEAEKTDKTE) is disordered.

This sequence belongs to the sirtuin family. Class I subfamily. It depends on Zn(2+) as a cofactor.

The protein resides in the cytoplasm. The protein localises to the nucleus. It carries out the reaction N(6)-acetyl-L-lysyl-[protein] + NAD(+) + H2O = 2''-O-acetyl-ADP-D-ribose + nicotinamide + L-lysyl-[protein]. The catalysed reaction is N(6)-tetradecanoyl-L-lysyl-[protein] + NAD(+) + H2O = 2''-O-tetradecanoyl-ADP-D-ribose + nicotinamide + L-lysyl-[protein]. The enzyme catalyses N(6)-hexadecanoyl-L-lysyl-[protein] + NAD(+) + H2O = 2''-O-hexadecanoyl-ADP-D-ribose + nicotinamide + L-lysyl-[protein]. NAD-dependent protein deacetylase, which deacetylates internal lysines on histone and alpha-tubulin as well as many other proteins such as key transcription factors. Participates in the modulation of multiple and diverse biological processes such as cell cycle control, genomic integrity, microtubule dynamics, cell differentiation, metabolic networks, and autophagy. Plays a major role in the control of cell cycle progression and genomic stability. Deacetylates histone H4 at 'Lys-16' (H4K16ac) at the VEGFA promoter. Thereby contributes to regulate expression of vegfa, a key regulator of angiogenesis. In addition to protein deacetylase activity, also has activity toward long-chain fatty acyl groups and mediates protein-lysine demyristoylation and depalmitoylation of target proteins. This chain is NAD-dependent protein deacetylase sirtuin-2 (sirt2), found in Danio rerio (Zebrafish).